The sequence spans 263 residues: tRNA pseudouridine synthase A (263 aa).

D51 functions as the Nucleophile in the catalytic mechanism. Substrate is bound at residue Y106.

Belongs to the tRNA pseudouridine synthase TruA family.

It catalyses the reaction uridine(38/39/40) in tRNA = pseudouridine(38/39/40) in tRNA. Functionally, formation of pseudouridine at positions 38, 39 and 40 in the anticodon stem and loop of transfer RNAs. The sequence is that of tRNA pseudouridine synthase A from Pyrococcus abyssi (strain GE5 / Orsay).